The following is a 486-amino-acid chain: Protein nucleotidyltransferase YdiU (486 aa).

G90, G92, R93, K113, D125, G126, R176, and R183 together coordinate ATP. The active-site Proton acceptor is D252. Mg(2+) contacts are provided by N253 and D262. Residue D262 coordinates ATP.

The protein belongs to the SELO family. The cofactor is Mg(2+). Mn(2+) is required as a cofactor.

It catalyses the reaction L-seryl-[protein] + ATP = 3-O-(5'-adenylyl)-L-seryl-[protein] + diphosphate. It carries out the reaction L-threonyl-[protein] + ATP = 3-O-(5'-adenylyl)-L-threonyl-[protein] + diphosphate. The enzyme catalyses L-tyrosyl-[protein] + ATP = O-(5'-adenylyl)-L-tyrosyl-[protein] + diphosphate. The catalysed reaction is L-histidyl-[protein] + UTP = N(tele)-(5'-uridylyl)-L-histidyl-[protein] + diphosphate. It catalyses the reaction L-seryl-[protein] + UTP = O-(5'-uridylyl)-L-seryl-[protein] + diphosphate. It carries out the reaction L-tyrosyl-[protein] + UTP = O-(5'-uridylyl)-L-tyrosyl-[protein] + diphosphate. Functionally, nucleotidyltransferase involved in the post-translational modification of proteins. It can catalyze the addition of adenosine monophosphate (AMP) or uridine monophosphate (UMP) to a protein, resulting in modifications known as AMPylation and UMPylation. This is Protein nucleotidyltransferase YdiU from Stutzerimonas stutzeri (strain A1501) (Pseudomonas stutzeri).